Here is a 1360-residue protein sequence, read N- to C-terminus: DNA mismatch repair protein Msh6 (1360 aa).

Positions 1 to 84 (MSRQSTLYSF…GLRRSVAPAA (84 aa)) are disordered. Residues Ser-14, Ser-41, and Ser-43 each carry the phosphoserine modification. A compositionally biased stretch (low complexity) spans 33-51 (RAAAAPGASPSPGGDAAWS). The residue at position 70 (Lys-70) is an N6-acetyllysine. Phosphoserine occurs at positions 79, 91, 137, 200, 219, and 227. The region spanning 92–154 (PGDLVWAKME…KRLLKPYTGS (63 aa)) is the PWWP domain. The interval 195–362 (VCDEPSEPEE…SGGGDDSSRP (168 aa)) is disordered. 2 stretches are compositionally biased toward acidic residues: residues 198 to 209 (EPSEPEEEEEME) and 219 to 230 (SEEDNEIESEEE). Residues 240–249 (RSSRQIKKRR) show a composition bias toward basic residues. Phosphoserine is present on residues Ser-252, Ser-254, Ser-256, and Ser-261. Over residues 263–273 (VEFKPDTKEEG) the composition is skewed to basic and acidic residues. A Phosphothreonine modification is found at Thr-269. Residues Ser-274, Ser-275, Ser-279, Ser-280, and Ser-309 each carry the phosphoserine modification. Over residues 320-351 (PSATKQATSISSETKNTLRAFSAPQNSESQAH) the composition is skewed to polar residues. The residue at position 488 (Thr-488) is a Phosphothreonine. Lys-504 carries the N6-acetyllysine modification. Phosphoserine is present on residues Ser-830 and Ser-935. Thr-1010 is modified (phosphothreonine). Residue 1134 to 1141 (GPNMGGKS) coordinates ATP.

It belongs to the DNA mismatch repair MutS family. In terms of assembly, component of the DNA mismatch repair (MMR) complex composed at least of MSH2, MSH3, MSH6, PMS1 and MLH1. Heterodimer consisting of MSH2-MSH6 (MutS alpha). Forms a ternary complex with MutL alpha (MLH1-PMS1). Interacts with MCM9. Part of the BRCA1-associated genome surveillance complex (BASC), which contains BRCA1, MSH2, MSH6, MLH1, ATM, BLM, PMS2 and the RAD50-MRE11-NBS1 protein complex. This association could be a dynamic process changing throughout the cell cycle and within subnuclear domains. (Microbial infection) Interacts with herpes simplex virus 1 protein UL12. In terms of processing, the N-terminus is blocked. Phosphorylated by PRKCZ, which may prevent MutS alpha degradation by the ubiquitin-proteasome pathway.

Its subcellular location is the nucleus. It is found in the chromosome. In terms of biological role, component of the post-replicative DNA mismatch repair system (MMR). Heterodimerizes with MSH2 to form MutS alpha, which binds to DNA mismatches thereby initiating DNA repair. When bound, MutS alpha bends the DNA helix and shields approximately 20 base pairs, and recognizes single base mismatches and dinucleotide insertion-deletion loops (IDL) in the DNA. After mismatch binding, forms a ternary complex with the MutL alpha heterodimer, which is thought to be responsible for directing the downstream MMR events, including strand discrimination, excision, and resynthesis. ATP binding and hydrolysis play a pivotal role in mismatch repair functions. The ATPase activity associated with MutS alpha regulates binding similar to a molecular switch: mismatched DNA provokes ADP--&gt;ATP exchange, resulting in a discernible conformational transition that converts MutS alpha into a sliding clamp capable of hydrolysis-independent diffusion along the DNA backbone. This transition is crucial for mismatch repair. MutS alpha may also play a role in DNA homologous recombination repair. Recruited on chromatin in G1 and early S phase via its PWWP domain that specifically binds trimethylated 'Lys-36' of histone H3 (H3K36me3): early recruitment to chromatin to be replicated allowing a quick identification of mismatch repair to initiate the DNA mismatch repair reaction. This chain is DNA mismatch repair protein Msh6, found in Homo sapiens (Human).